Here is a 215-residue protein sequence, read N- to C-terminus: Pyrrolidone-carboxylate peptidase (215 aa).

Catalysis depends on residues Glu78, Cys141, and His165.

The protein belongs to the peptidase C15 family. As to quaternary structure, homotetramer.

The protein localises to the cytoplasm. It catalyses the reaction Release of an N-terminal pyroglutamyl group from a polypeptide, the second amino acid generally not being Pro.. In terms of biological role, removes 5-oxoproline from various penultimate amino acid residues except L-proline. The polypeptide is Pyrrolidone-carboxylate peptidase (Streptococcus pyogenes serotype M3 (strain SSI-1)).